Reading from the N-terminus, the 71-residue chain is DNA-directed RNA polymerase subunit epsilon (71 aa).

It belongs to the RNA polymerase subunit epsilon family. As to quaternary structure, RNAP is composed of a core of 2 alpha, a beta and a beta' subunit. The core is associated with a delta subunit, and at least one of epsilon or omega. When a sigma factor is associated with the core the holoenzyme is formed, which can initiate transcription.

It carries out the reaction RNA(n) + a ribonucleoside 5'-triphosphate = RNA(n+1) + diphosphate. Its function is as follows. A non-essential component of RNA polymerase (RNAP). The chain is DNA-directed RNA polymerase subunit epsilon from Geobacillus kaustophilus (strain HTA426).